The primary structure comprises 42 residues: uncharacterized protein (42 aa).

The interval 20-42 (RSGRAERGVRAHSPAWSERPTPN) is disordered.

This is an uncharacterized protein from Escherichia coli.